The following is a 426-amino-acid chain: Spermatogenesis-associated protein 2-like protein (426 aa).

4 disordered regions span residues 204–223 (AQDE…TYGA), 234–256 (DESS…PVEL), 269–300 (LWGS…EELE), and 316–347 (SRSG…ASSA). Phosphoserine is present on residues Ser318 and Ser326.

This sequence belongs to the SPATA2 family.

The sequence is that of Spermatogenesis-associated protein 2-like protein from Mus musculus (Mouse).